The chain runs to 221 residues: Transcription repressor OFP8 (221 aa).

Positions 124–138 (EDEGDKEESEDDDSD) are enriched in acidic residues. Positions 124 to 147 (EDEGDKEESEDDDSDTLFSSRSFS) are disordered. Residues 158–217 (VVKKSKDPYEDFRTSMVEMIVERQIFAPAELQQLLQCFLSLNSRQHHKVIVQVFLEIYAT) enclose the OVATE domain.

In terms of tissue distribution, expressed in roots, rosette and cauline leaves, shoots, stems, flower buds and siliques.

The protein localises to the nucleus. Its function is as follows. Transcriptional repressor that regulates multiple aspects of plant growth and development through the regulation of BEL1-LIKE (BLH) and KNOX TALE (KNAT) homeodomain transcription factors. The chain is Transcription repressor OFP8 (OFP8) from Arabidopsis thaliana (Mouse-ear cress).